The primary structure comprises 462 residues: cAMP-dependent protein kinase regulatory subunit (462 aa).

The tract at residues 54 to 203 (TPSPRFPPSP…RLKYAIEGNF (150 aa)) is dimerization and phosphorylation. Positions 79–157 (FGANANPFGG…PTTDSYPAQY (79 aa)) are disordered. Low complexity predominate over residues 80 to 102 (GANANPFGGSSSNPNPFGGSASP). A Phosphoserine modification is found at serine 164. 3',5'-cyclic AMP is bound by residues 204 to 333 (LFSH…FLEE), glutamate 282, arginine 291, 336 to 453 (ILSS…KTGV), glutamate 401, and arginine 410.

Belongs to the cAMP-dependent kinase regulatory chain family. As to quaternary structure, tetramer, composed of 2 regulatory (R) and 2 catalytic (C) subunits. In the presence of cAMP it dissociates into 2 active monomeric C subunits and an R dimer.

This Hypocrea atroviridis (Trichoderma atroviride) protein is cAMP-dependent protein kinase regulatory subunit (pkar1).